A 464-amino-acid polypeptide reads, in one-letter code: MSLVDISGAYSLVPLPPPPPPLMRRRAPLPPPPPPPLMRRRAPPPPPPPLMRRRAPPPPPPPPLPRPCSRPPKTKCSLKPLHWVKKTRALPGSLWDELQRRQECRDIEDEQILCAIELSVSEIETIFSLGAKPKPKPEPEKVPLIDLRRATNTEIRLMLLNIRLPDMIAAAMAMDESRLDDFDQIENLINLFPTKEDMKFLLTYTGDKGNCEQLFQYLQEVVKVPRVESKLRVFSFKIQFGTQITKLTKGLNAVNSACEEIRTSQKLKDIMENILCLGNILNQGTGRGRAVGFRLDSLLILSETRADNSKMTLMHYLCKVLASKASDLLDFHKDLESLESASKIQLKSLAEEIQAITKGLEKLKQELTASETDGPVSQVFRKLLKEFISNAETQVATVMALYYPARGNAEALAHYFGYHYPFEQVTATLLSFIRLFKKAHEENVKQAELEKKKAAKEAEMEKTK.

The disordered stretch occupies residues 1-74 (MSLVDISGAY…PRPCSRPPKT (74 aa)). Positions 14 to 70 (PLPPPPPPLMRRRAPLPPPPPPPLMRRRAPPPPPPPLMRRRAPPPPPPPPLPRPCSR) are enriched in pro residues. The region spanning 68 to 462 (CSRPPKTKCS…KAAKEAEMEK (395 aa)) is the FH2 domain.

It belongs to the formin-like family. Class-II subfamily.

This is Formin-like protein 19 (FH19) from Arabidopsis thaliana (Mouse-ear cress).